A 466-amino-acid chain; its full sequence is Asparagine--tRNA ligase (466 aa).

This sequence belongs to the class-II aminoacyl-tRNA synthetase family. In terms of assembly, homodimer.

The protein localises to the cytoplasm. The enzyme catalyses tRNA(Asn) + L-asparagine + ATP = L-asparaginyl-tRNA(Asn) + AMP + diphosphate + H(+). The sequence is that of Asparagine--tRNA ligase from Shewanella pealeana (strain ATCC 700345 / ANG-SQ1).